The following is a 138-amino-acid chain: Protein NrdI (138 aa).

It belongs to the NrdI family.

Functionally, probably involved in ribonucleotide reductase function. This Paracoccus denitrificans (strain Pd 1222) protein is Protein NrdI.